The following is a 398-amino-acid chain: Phosphoglycerate kinase (398 aa).

Substrate is bound by residues 24–26, arginine 40, 63–66, arginine 122, and arginine 155; these read DFN and HMGR. ATP is bound by residues lysine 206, glycine 294, glutamate 325, and 354 to 357; that span reads GGDS.

This sequence belongs to the phosphoglycerate kinase family. Monomer.

It localises to the cytoplasm. The enzyme catalyses (2R)-3-phosphoglycerate + ATP = (2R)-3-phospho-glyceroyl phosphate + ADP. It functions in the pathway carbohydrate degradation; glycolysis; pyruvate from D-glyceraldehyde 3-phosphate: step 2/5. The chain is Phosphoglycerate kinase from Picosynechococcus sp. (strain ATCC 27264 / PCC 7002 / PR-6) (Agmenellum quadruplicatum).